A 2256-amino-acid polypeptide reads, in one-letter code: Death-inducer obliterator 1 (2256 aa).

N-acetylmethionine is present on Met1. Residues 1-25 (MDDKGHLSNEEAPKAIKPTSKEFRK) are compositionally biased toward basic and acidic residues. Residues 1–256 (MDDKGHLSNE…NPREAGKPKP (256 aa)) form a disordered region. 2 stretches are compositionally biased toward polar residues: residues 48–59 (SEQQPQQHNLSL) and 96–119 (EPTS…SSEI). Ser58 and Ser112 each carry phosphoserine. Residues 128–142 (LGKEHPASSEKAKGG) are compositionally biased toward basic and acidic residues. A compositionally biased stretch (acidic residues) spans 143 to 153 (EEEEDTSDSDS). A Phosphothreonine modification is found at Thr148. A phosphoserine mark is found at Ser149 and Ser151. Short sequence motifs (nuclear localization signal) lie at residues 162 to 170 (QNRLRRKRE) and 182 to 190 (QNRLRKKRR). The span at 169–178 (REQEPVERSL) shows a compositional bias: basic and acidic residues. 2 stretches are compositionally biased toward basic and acidic residues: residues 206-216 (EQDRPLCKQEP) and 246-256 (ENPREAGKPKP). The PHD-type zinc finger occupies 265–319 (ALYCICRQPHNNRFMICCDRCEEWFHGDCVGISEARGRLLERNGEDYICPNCTIL). 7 disordered regions span residues 481-535 (LASR…DDRR), 598-624 (RPWP…ASKK), 641-668 (ANVP…SQIR), 778-822 (SRTK…PEKS), 856-970 (QVPS…TALS), 1011-1039 (AKPS…PPEG), and 1197-1218 (PSSA…QEEL). The span at 495-506 (ESSTPSWASDHN) shows a compositional bias: polar residues. Phosphoserine is present on Ser522. The TFIIS central domain occupies 667–787 (IRQNIRRSLK…SRTKLLNESK (121 aa)). Over residues 778 to 788 (SRTKLLNESKK) the composition is skewed to basic and acidic residues. The span at 797 to 812 (PDMEDSPPVSDSEEQQ) shows a compositional bias: acidic residues. Phosphoserine is present on residues Ser802 and Ser806. Basic and acidic residues-rich tracts occupy residues 875-886 (SKKEDFKPRHDS) and 921-935 (QERK…DSHP). A Glycyl lysine isopeptide (Lys-Gly) (interchain with G-Cter in SUMO2) cross-link involves residue Lys876. Ser886 carries the phosphoserine modification. The span at 937-962 (PSSLGGLSPSSASGGSGVVTTVTMSG) shows a compositional bias: low complexity. Ser1016, Ser1027, and Ser1035 each carry phosphoserine. Over residues 1202–1215 (ELDKTDEKRTRLQQ) the composition is skewed to basic and acidic residues. A Phosphotyrosine modification is found at Tyr1239. Residues 1245-1288 (DTAATSTTPPGSPPPPPPLPEPPVLKILSSLKPGSTSTVTAPTT) are disordered. Residue Thr1252 is modified to Phosphothreonine. Pro residues predominate over residues 1254–1267 (PGSPPPPPPLPEPP). Ser1256 carries the phosphoserine modification. Residues 1279 to 1288 (STSTVTAPTT) are compositionally biased toward low complexity. Ser1307 is subject to Phosphoserine. Disordered regions lie at residues 1320–1347 (KKSF…KGED), 1362–1421 (FGQF…VAYD), 1509–1609 (SDAL…EAKE), and 1630–2256 (QKCE…AAQA). Acidic residues predominate over residues 1371 to 1387 (LEEEEEDDRPYDPEEEY). Ser1514 is modified (phosphoserine). The span at 1526–1546 (LFSQEQQAPDPSQGAPNTNHN) shows a compositional bias: polar residues. The segment covering 1547 to 1557 (LDSRQSRDPRQ) has biased composition (basic and acidic residues). Low complexity predominate over residues 1649-1666 (PTAGDGAARPAPPRRVLL). Pro residues predominate over residues 1667–1679 (PTPPSTTFPPSFP). The span at 1699–1712 (TFMSQETSLGSSQY) shows a compositional bias: polar residues. At Ser1726 the chain carries Phosphoserine. Over residues 1783–1792 (FPGPRGPVPP) the composition is skewed to pro residues. Arg1848 carries the omega-N-methylarginine modification. Over residues 1855 to 1869 (FEDRKDPHGEKREFQ) the composition is skewed to basic and acidic residues. An asymmetric dimethylarginine mark is found at Arg1904, Arg1905, Arg1988, Arg1993, Arg2004, Arg2019, and Arg2035. 2 stretches are compositionally biased toward basic and acidic residues: residues 2081–2113 (EFRE…KPLD) and 2123–2246 (RQGR…EART).

In terms of assembly, interacts specifically (via PHD-type zinc finger) with histone H3 that is trimethylated at 'Lys-4' (H3K4me3), histone phosphorylation at 'Thr-3' or 'Thr-6' disrupts this binding and promotes translocation of DIDO1 from chromatin to the mitotic spindle during mitosis. Ubiquitous. Expressed at intermediate levels.

The protein resides in the cytoplasm. Its subcellular location is the nucleus. It is found in the cytoskeleton. It localises to the spindle. In terms of biological role, required for early embryonic stem cell development. Putative transcription factor, weakly pro-apoptotic when overexpressed. The protein is Death-inducer obliterator 1 (Dido1) of Mus musculus (Mouse).